The primary structure comprises 1434 residues: Probable deoxyribonuclease RhsA (1434 aa).

The segment at 14–42 (AMHAGNRPNPPDDRPQPCRGKPPTSPGKT) is disordered. A run of 2 helical transmembrane segments spans residues 48–68 (FLGALAGAVAGALVAAAVAAA) and 70–90 (VFLVGVTGGLAVAAVGALAVF). YD repeat units lie at residues 486–521 (YDAAHRLTRWHDNDQTWARYEYDAQGRCVYTTCADG), 592–628 (DDTGRVSTFTDASGHQWQYDYDAAQRLCGVTDPLGRE), and 847–876 (YDARGLLLRETAPDDTLHYRYDAVGRLTEV).

The protein belongs to the RHS/WapA nuclease family.

It is found in the membrane. Toxic component of a toxin-immunity protein module, which functions as a cellular contact-dependent growth inhibition (CDI) system. This protein may be a nuclease that is specifically inhibited by its cognate immunity protein RhsAI. Upon expression of the C-terminus (residues 1284-1434) in E.coli growth is inhibited, cells elongate, nucleoids condense and plasmid DNA is degraded; these effects are blocked specifically by cognate immunity protein RshIA. Cell contact is necessary for growth inhibition. The sequence is that of Probable deoxyribonuclease RhsA (rhsA) from Dickeya dadantii (strain 3937) (Erwinia chrysanthemi (strain 3937)).